Reading from the N-terminus, the 291-residue chain is Lipoyl synthase, mitochondrial (291 aa).

Positions 45, 50, 56, 71, 75, 78, and 283 each coordinate [4Fe-4S] cluster. One can recognise a Radical SAM core domain in the interval 57–272 (WGEGTATFMI…EKIGKELGFR (216 aa)).

It belongs to the radical SAM superfamily. Lipoyl synthase family. Requires [4Fe-4S] cluster as cofactor.

It is found in the mitochondrion. The enzyme catalyses [[Fe-S] cluster scaffold protein carrying a second [4Fe-4S](2+) cluster] + N(6)-octanoyl-L-lysyl-[protein] + 2 oxidized [2Fe-2S]-[ferredoxin] + 2 S-adenosyl-L-methionine + 4 H(+) = [[Fe-S] cluster scaffold protein] + N(6)-[(R)-dihydrolipoyl]-L-lysyl-[protein] + 4 Fe(3+) + 2 hydrogen sulfide + 2 5'-deoxyadenosine + 2 L-methionine + 2 reduced [2Fe-2S]-[ferredoxin]. Its pathway is protein modification; protein lipoylation via endogenous pathway; protein N(6)-(lipoyl)lysine from octanoyl-[acyl-carrier-protein]: step 2/2. Catalyzes the radical-mediated insertion of two sulfur atoms into the C-6 and C-8 positions of the octanoyl moiety bound to the lipoyl domains of lipoate-dependent enzymes, thereby converting the octanoylated domains into lipoylated derivatives. The sequence is that of Lipoyl synthase, mitochondrial from Nematostella vectensis (Starlet sea anemone).